The chain runs to 120 residues: Cell division protein FtsL (120 aa).

Residues 1 to 22 (MSNVAYKSNLEPNRVHREAEQP) form a disordered region. Residues 1–37 (MSNVAYKSNLEPNRVHREAEQPKKQILKRGQMTLGEK) are Cytoplasmic-facing. Residues 13 to 22 (NRVHREAEQP) are compositionally biased toward basic and acidic residues. A helical transmembrane segment spans residues 38–58 (VIITIALAIVLVVAFRIISVQ). Residues 59–120 (AQIYTVNQEI…GDNVKVVDGQ (62 aa)) lie on the Extracellular side of the membrane.

Belongs to the FtsL family.

It is found in the cell membrane. Essential cell division protein. The protein is Cell division protein FtsL of Listeria monocytogenes serovar 1/2a (strain ATCC BAA-679 / EGD-e).